The chain runs to 231 residues: 7-cyano-7-deazaguanine synthase (231 aa).

Phe-8–Leu-18 is a binding site for ATP. Zn(2+)-binding residues include Cys-188, Cys-197, Cys-200, and Cys-203.

The protein belongs to the QueC family. Requires Zn(2+) as cofactor.

It carries out the reaction 7-carboxy-7-deazaguanine + NH4(+) + ATP = 7-cyano-7-deazaguanine + ADP + phosphate + H2O + H(+). The protein operates within purine metabolism; 7-cyano-7-deazaguanine biosynthesis. In terms of biological role, catalyzes the ATP-dependent conversion of 7-carboxy-7-deazaguanine (CDG) to 7-cyano-7-deazaguanine (preQ(0)). The sequence is that of 7-cyano-7-deazaguanine synthase from Cronobacter sakazakii (strain ATCC BAA-894) (Enterobacter sakazakii).